Here is a 375-residue protein sequence, read N- to C-terminus: DNA replication and repair protein RecF (375 aa).

30-37 contributes to the ATP binding site; that stretch reads GLNGQGKT.

Belongs to the RecF family.

The protein resides in the cytoplasm. Its function is as follows. The RecF protein is involved in DNA metabolism; it is required for DNA replication and normal SOS inducibility. RecF binds preferentially to single-stranded, linear DNA. It also seems to bind ATP. The chain is DNA replication and repair protein RecF from Halothermothrix orenii (strain H 168 / OCM 544 / DSM 9562).